A 711-amino-acid polypeptide reads, in one-letter code: Polyribonucleotide nucleotidyltransferase (711 aa).

Asp-489 and Asp-495 together coordinate Mg(2+). The 60-residue stretch at 556–615 (PRIHTIKISPDKIKDVIGKGGSVIRALTEETGTTIEIEDDGTVKIAATDGEKAKHAIRRI) folds into the KH domain. The S1 motif domain maps to 625-693 (GRIYNGKVTR…RQGRVRLSIK (69 aa)).

Belongs to the polyribonucleotide nucleotidyltransferase family. In terms of assembly, component of the RNA degradosome, which is a multiprotein complex involved in RNA processing and mRNA degradation. Requires Mg(2+) as cofactor.

Its subcellular location is the cytoplasm. It catalyses the reaction RNA(n+1) + phosphate = RNA(n) + a ribonucleoside 5'-diphosphate. Functionally, involved in mRNA degradation. Catalyzes the phosphorolysis of single-stranded polyribonucleotides processively in the 3'- to 5'-direction. In Cronobacter sakazakii (strain ATCC BAA-894) (Enterobacter sakazakii), this protein is Polyribonucleotide nucleotidyltransferase.